Here is a 255-residue protein sequence, read N- to C-terminus: 5-oxoprolinase subunit A (255 aa).

The protein belongs to the LamB/PxpA family. Forms a complex composed of PxpA, PxpB and PxpC.

It catalyses the reaction 5-oxo-L-proline + ATP + 2 H2O = L-glutamate + ADP + phosphate + H(+). Functionally, catalyzes the cleavage of 5-oxoproline to form L-glutamate coupled to the hydrolysis of ATP to ADP and inorganic phosphate. The chain is 5-oxoprolinase subunit A from Rhodopseudomonas palustris (strain BisB18).